Reading from the N-terminus, the 161-residue chain is 6,7-dimethyl-8-ribityllumazine synthase (161 aa).

5-amino-6-(D-ribitylamino)uracil contacts are provided by residues W31, 63-65 (SFE), and 85-87 (VVI). A (2S)-2-hydroxy-3-oxobutyl phosphate-binding site is contributed by 90-91 (GT). Catalysis depends on H93, which acts as the Proton donor. Position 118 (F118) interacts with 5-amino-6-(D-ribitylamino)uracil. R132 contacts (2S)-2-hydroxy-3-oxobutyl phosphate.

Belongs to the DMRL synthase family.

The enzyme catalyses (2S)-2-hydroxy-3-oxobutyl phosphate + 5-amino-6-(D-ribitylamino)uracil = 6,7-dimethyl-8-(1-D-ribityl)lumazine + phosphate + 2 H2O + H(+). The protein operates within cofactor biosynthesis; riboflavin biosynthesis; riboflavin from 2-hydroxy-3-oxobutyl phosphate and 5-amino-6-(D-ribitylamino)uracil: step 1/2. Functionally, catalyzes the formation of 6,7-dimethyl-8-ribityllumazine by condensation of 5-amino-6-(D-ribitylamino)uracil with 3,4-dihydroxy-2-butanone 4-phosphate. This is the penultimate step in the biosynthesis of riboflavin. In Paenarthrobacter aurescens (strain TC1), this protein is 6,7-dimethyl-8-ribityllumazine synthase.